The sequence spans 200 residues: ATP-dependent Clp protease proteolytic subunit 3 (200 aa).

Serine 101 serves as the catalytic Nucleophile. Histidine 126 is a catalytic residue.

Belongs to the peptidase S14 family. Fourteen ClpP subunits assemble into 2 heptameric rings which stack back to back to give a disk-like structure with a central cavity, resembling the structure of eukaryotic proteasomes.

It is found in the cytoplasm. The enzyme catalyses Hydrolysis of proteins to small peptides in the presence of ATP and magnesium. alpha-casein is the usual test substrate. In the absence of ATP, only oligopeptides shorter than five residues are hydrolyzed (such as succinyl-Leu-Tyr-|-NHMec, and Leu-Tyr-Leu-|-Tyr-Trp, in which cleavage of the -Tyr-|-Leu- and -Tyr-|-Trp bonds also occurs).. In terms of biological role, cleaves peptides in various proteins in a process that requires ATP hydrolysis. Has a chymotrypsin-like activity. Plays a major role in the degradation of misfolded proteins. This Synechococcus sp. (strain CC9605) protein is ATP-dependent Clp protease proteolytic subunit 3.